Here is a 263-residue protein sequence, read N- to C-terminus: Uridylate kinase (263 aa).

29-32 (KVSG) contributes to the ATP binding site. Gly-71 lines the UMP pocket. ATP-binding residues include Gly-72 and Arg-76. UMP is bound by residues Asp-91 and 152–159 (TGNPFFTT). Residues Thr-179, Gln-180, Tyr-185, and Asp-188 each contribute to the ATP site.

The protein belongs to the UMP kinase family. In terms of assembly, homohexamer.

It is found in the cytoplasm. It carries out the reaction UMP + ATP = UDP + ADP. It functions in the pathway pyrimidine metabolism; CTP biosynthesis via de novo pathway; UDP from UMP (UMPK route): step 1/1. Inhibited by UTP. Its function is as follows. Catalyzes the reversible phosphorylation of UMP to UDP. The protein is Uridylate kinase of Maricaulis maris (strain MCS10) (Caulobacter maris).